The sequence spans 254 residues: Ubiquinone biosynthesis O-methyltransferase (254 aa).

Positions 47, 78, 99, and 141 each coordinate S-adenosyl-L-methionine.

It belongs to the methyltransferase superfamily. UbiG/COQ3 family.

The catalysed reaction is a 3-demethylubiquinol + S-adenosyl-L-methionine = a ubiquinol + S-adenosyl-L-homocysteine + H(+). It carries out the reaction a 3-(all-trans-polyprenyl)benzene-1,2-diol + S-adenosyl-L-methionine = a 2-methoxy-6-(all-trans-polyprenyl)phenol + S-adenosyl-L-homocysteine + H(+). It participates in cofactor biosynthesis; ubiquinone biosynthesis. In terms of biological role, O-methyltransferase that catalyzes the 2 O-methylation steps in the ubiquinone biosynthetic pathway. In Rhodopseudomonas palustris (strain BisB18), this protein is Ubiquinone biosynthesis O-methyltransferase.